A 264-amino-acid polypeptide reads, in one-letter code: 3-methyl-2-oxobutanoate hydroxymethyltransferase (264 aa).

Mg(2+) is bound by residues Asp-45 and Asp-84. 3-methyl-2-oxobutanoate-binding positions include 45–46 (DS), Asp-84, and Lys-112. Glu-114 is a Mg(2+) binding site. The Proton acceptor role is filled by Glu-181.

This sequence belongs to the PanB family. In terms of assembly, homodecamer; pentamer of dimers. Mg(2+) is required as a cofactor.

It is found in the cytoplasm. It carries out the reaction 3-methyl-2-oxobutanoate + (6R)-5,10-methylene-5,6,7,8-tetrahydrofolate + H2O = 2-dehydropantoate + (6S)-5,6,7,8-tetrahydrofolate. Its pathway is cofactor biosynthesis; (R)-pantothenate biosynthesis; (R)-pantoate from 3-methyl-2-oxobutanoate: step 1/2. Its function is as follows. Catalyzes the reversible reaction in which hydroxymethyl group from 5,10-methylenetetrahydrofolate is transferred onto alpha-ketoisovalerate to form ketopantoate. The protein is 3-methyl-2-oxobutanoate hydroxymethyltransferase of Shigella dysenteriae serotype 1 (strain Sd197).